A 470-amino-acid polypeptide reads, in one-letter code: MNPNQKIICISATGMTLSVVSLLVGIANLGLNIGLHYKVGDTPNVNIPNVNGTNSTTTIINNNTQNNFTNITNIIQSKGGERTFLNLTKPLCEVNSWHILSKDNAIRIGEDAHILVTREPYLSCDPQGCRMFALSQGTTLRGRHANGTIHDRSPFRALISWEMGQAPSPYNTRVECIGWSSTSCHDGMSRMSICMSGPNNNASAVVWYGGRPITEIPSWAGNILRTQESECVCHKGVCPVVMTDGPANNRAATKIIYFKEGKIQKIEELAGNAQHIEECSCYGAGGVIKCICRDNWKGANRPVITIDPEMMTHTSKYLCSKVLTDTSRPNDPTNGNCDAPITGGSPDPGVKGFAFLDGENSWLGRTISKDSRSGYEMLKVPNAETDIQSGPISNQVIVNNQNWSGYSGAFIDYWANKECFNPCFYVELIRGRPKESSVLWTSNSIVALCGSKKRLGSWSWHDGAEIIYFE.

At M1 to K6 the chain is on the intravirion side. The chain crosses the membrane as a helical span at residues I7–A27. The interval S11–I33 is involved in apical transport and lipid raft association. At N28–E470 the chain is on the virion surface side. The segment at H36–T88 is hypervariable stalk region. N-linked (GlcNAc...) asparagine; by host glycans are attached at residues N51, N54, N62, N67, N70, and N86. Residues L91–E470 form a head of neuraminidase region. 9 disulfide bridges follow: C92/C419, C124/C129, C176/C194, C184/C231, C233/C238, C279/C292, C281/C290, C319/C337, and C423/C449. R118 is a substrate binding site. Residue N146 is glycosylated (N-linked (GlcNAc...) asparagine; by host). Catalysis depends on D151, which acts as the Proton donor/acceptor. R152 provides a ligand contact to substrate. A glycan (N-linked (GlcNAc...) asparagine; by host) is linked at N201. Substrate is bound at residue E277–E278. Position 293 (R293) interacts with substrate. Residues D294, G298, D325, and P348 each contribute to the Ca(2+) site. R372 is a substrate binding site. N-linked (GlcNAc...) asparagine; by host glycosylation is present at N402. Y406 functions as the Nucleophile in the catalytic mechanism.

This sequence belongs to the glycosyl hydrolase 34 family. In terms of assembly, homotetramer. Requires Ca(2+) as cofactor. N-glycosylated.

The protein localises to the virion membrane. It is found in the host apical cell membrane. The enzyme catalyses Hydrolysis of alpha-(2-&gt;3)-, alpha-(2-&gt;6)-, alpha-(2-&gt;8)- glycosidic linkages of terminal sialic acid residues in oligosaccharides, glycoproteins, glycolipids, colominic acid and synthetic substrates.. Its activity is regulated as follows. Inhibited by the neuraminidase inhibitors zanamivir (Relenza) and oseltamivir (Tamiflu). These drugs interfere with the release of progeny virus from infected cells and are effective against all influenza strains. Resistance to neuraminidase inhibitors is quite rare. Functionally, catalyzes the removal of terminal sialic acid residues from viral and cellular glycoconjugates. Cleaves off the terminal sialic acids on the glycosylated HA during virus budding to facilitate virus release. Additionally helps virus spread through the circulation by further removing sialic acids from the cell surface. These cleavages prevent self-aggregation and ensure the efficient spread of the progeny virus from cell to cell. Otherwise, infection would be limited to one round of replication. Described as a receptor-destroying enzyme because it cleaves a terminal sialic acid from the cellular receptors. May facilitate viral invasion of the upper airways by cleaving the sialic acid moieties on the mucin of the airway epithelial cells. Likely to plays a role in the budding process through its association with lipid rafts during intracellular transport. May additionally display a raft-association independent effect on budding. Plays a role in the determination of host range restriction on replication and virulence. Sialidase activity in late endosome/lysosome traffic seems to enhance virus replication. This Influenza A virus (strain A/Duck/England/1/1956 H11N6) protein is Neuraminidase.